A 227-amino-acid chain; its full sequence is Cytochrome c oxidase subunit 2 (227 aa).

At 1–14 (MAYPFQLGLXDATS) the chain is on the mitochondrial intermembrane side. A helical membrane pass occupies residues 15–45 (PIMEELLHFHDHTLMIVFLISSLVLYIITLM). At 46–59 (LTTKLTHTSTMDAQ) the chain is on the mitochondrial matrix side. The chain crosses the membrane as a helical span at residues 60–87 (EVETVWTILPAIILILIALPSLRILYMM). Over 88-227 (DEINNPSLTV…YFETWSAVMV (140 aa)) the chain is Mitochondrial intermembrane. Histidine 161, cysteine 196, glutamate 198, cysteine 200, histidine 204, and methionine 207 together coordinate Cu cation. Position 198 (glutamate 198) interacts with Mg(2+).

This sequence belongs to the cytochrome c oxidase subunit 2 family. In terms of assembly, component of the cytochrome c oxidase (complex IV, CIV), a multisubunit enzyme composed of 14 subunits. The complex is composed of a catalytic core of 3 subunits MT-CO1, MT-CO2 and MT-CO3, encoded in the mitochondrial DNA, and 11 supernumerary subunits COX4I, COX5A, COX5B, COX6A, COX6B, COX6C, COX7A, COX7B, COX7C, COX8 and NDUFA4, which are encoded in the nuclear genome. The complex exists as a monomer or a dimer and forms supercomplexes (SCs) in the inner mitochondrial membrane with NADH-ubiquinone oxidoreductase (complex I, CI) and ubiquinol-cytochrome c oxidoreductase (cytochrome b-c1 complex, complex III, CIII), resulting in different assemblies (supercomplex SCI(1)III(2)IV(1) and megacomplex MCI(2)III(2)IV(2)). Found in a complex with TMEM177, COA6, COX18, COX20, SCO1 and SCO2. Interacts with TMEM177 in a COX20-dependent manner. Interacts with COX20. Interacts with COX16. It depends on Cu cation as a cofactor.

Its subcellular location is the mitochondrion inner membrane. The enzyme catalyses 4 Fe(II)-[cytochrome c] + O2 + 8 H(+)(in) = 4 Fe(III)-[cytochrome c] + 2 H2O + 4 H(+)(out). In terms of biological role, component of the cytochrome c oxidase, the last enzyme in the mitochondrial electron transport chain which drives oxidative phosphorylation. The respiratory chain contains 3 multisubunit complexes succinate dehydrogenase (complex II, CII), ubiquinol-cytochrome c oxidoreductase (cytochrome b-c1 complex, complex III, CIII) and cytochrome c oxidase (complex IV, CIV), that cooperate to transfer electrons derived from NADH and succinate to molecular oxygen, creating an electrochemical gradient over the inner membrane that drives transmembrane transport and the ATP synthase. Cytochrome c oxidase is the component of the respiratory chain that catalyzes the reduction of oxygen to water. Electrons originating from reduced cytochrome c in the intermembrane space (IMS) are transferred via the dinuclear copper A center (CU(A)) of subunit 2 and heme A of subunit 1 to the active site in subunit 1, a binuclear center (BNC) formed by heme A3 and copper B (CU(B)). The BNC reduces molecular oxygen to 2 water molecules using 4 electrons from cytochrome c in the IMS and 4 protons from the mitochondrial matrix. In Vulpes corsac (Corsac fox), this protein is Cytochrome c oxidase subunit 2 (MT-CO2).